Here is a 203-residue protein sequence, read N- to C-terminus: Enterotoxin-like toxin X (203 aa).

The sialic acid-binding motif stretch occupies residues 164–180 (YTLESHKELQKNRENVE).

The protein belongs to the staphylococcal/streptococcal toxin family.

The protein localises to the secreted. In terms of biological role, plays a role in the inhibition of the host innate immune system. Inhibits phagocytosis and killing by human neutrophils by interacting with multiple neutrophil surface glycoproteins in a sialic acid-dependent manner. The polypeptide is Enterotoxin-like toxin X (Staphylococcus aureus).